Reading from the N-terminus, the 643-residue chain is Galactan 5-O-arabinofuranosyltransferase (643 aa).

Transmembrane regions (helical) follow at residues V25–V45, A66–W86, L97–A117, F180–W200, F205–P225, A229–A249, W255–Y272, V276–S293, L309–L329, F355–V375, A384–A404, L420–G440, and G445–I465. Topologically, residues P466–A643 are extracellular.

It belongs to the glycosyltransferase 85 family.

The protein localises to the cell membrane. It carries out the reaction Adds an alpha-D-arabinofuranosyl group from trans,octacis-decaprenylphospho-beta-D-arabinofuranose at the 5-O-position of the eighth, tenth and twelfth galactofuranose unit of the galactofuranan chain of [beta-D-galactofuranosyl-(1-&gt;5)-beta-D-galactofuranosyl-(1-&gt;6)]14-beta-D-galactofuranosyl-(1-&gt;5)-beta-D-galactofuranosyl-(1-&gt;4)-alpha-L-rhamnopyranosyl-(1-&gt;3)-N-acetyl-alpha-D-glucosaminyl-diphospho-trans,octacis-decaprenol.. It functions in the pathway cell wall biogenesis; cell wall polysaccharide biosynthesis. Its function is as follows. Involved in the biosynthesis of the arabinogalactan (AG) region of the mycolylarabinogalactan-peptidoglycan (mAGP) complex, an essential component of the mycobacterial cell wall. Catalyzes the addition of the first key arabinofuranosyl (Araf) residue from the sugar donor decaprenyl-phospho-arabinose (DPA) on the C-5 of a 6-linked galactofuranosyl (Galf) of the galactan domain, thus 'priming' the galactan for further elaboration by other arabinofuranosyltransferases. It is not able to add an Araf residue to a terminal Galf. This Mycobacterium tuberculosis (strain CDC 1551 / Oshkosh) protein is Galactan 5-O-arabinofuranosyltransferase.